The sequence spans 508 residues: RanBP-type and C3HC4-type zinc finger-containing protein 1 (508 aa).

Met1 bears the N-acetylmethionine mark. The tract at residues 1-218 (MDEKTKKAEE…PGCEMCCRAR (218 aa)) is interaction with IRF3. The tract at residues 1-268 (MDEKTKKAEE…NYLQHVQLEQ (268 aa)) is interaction with TAB2. Ser50 bears the Phosphoserine mark. The Ubiquitin-like domain occupies 55 to 119 (IRLCVSVEDA…DQETLHSHGI (65 aa)). The interval 69 to 131 (VTIWLTVRPD…NGDSAYLYLL (63 aa)) is interaction with RNF31. The interval 161–191 (TLQPRGPLEPVLPKPRTHQETGQPDAAPESP) is disordered. The segment at 188-220 (PESPPVGWQCPGCTFINKPTRPGCEMCCRARPE) adopts a RanBP2-type zinc-finger fold. The stretch at 231–260 (DEEERARLAGEEEALRQYEQRKQQQQEGNY) forms a coiled coil. The segment at 276-504 (EPAECPVCYS…VNGIPCHPSC (229 aa)) is TRIAD supradomain. Zn(2+) contacts are provided by Cys280, Cys283, Cys298, His300, Cys303, Cys306, and Cys321. An RING-type 1 zinc finger spans residues 280–330 (CPVCYSVLAPGEAVVLRECLHTFCRECLQGTIRNSQEAEVSCPFIDNTYSC). Tyr328 is subject to Phosphotyrosine. 11 residues coordinate Zn(2+): Cys330, Cys369, Cys374, Cys389, Cys392, Cys397, Cys400, His404, Cys409, Cys445, and Cys448. The IBR-type zinc finger occupies 349-409 (QRFLDLGVSI…CKAIHERMNC (61 aa)). The segment at 445 to 474 (CPQCRIVVQKKDGCDWIRCTVCHTEICWVT) adopts an RING-type 2; atypical zinc-finger fold. Cys458 is a catalytic residue. Zn(2+)-binding residues include Cys463 and Cys466.

Belongs to the RBR family. In terms of assembly, component of the LUBAC complex (linear ubiquitin chain assembly complex) which consists of SHARPIN, RBCK1 and RNF31. LUBAC has a MW of approximately 600 kDa suggesting a heteromultimeric assembly of its subunits. Interacts with beta-I-type (PRKCB1) and zeta-type protein kinase C (PRKCZ). Interacts with UBE2L3. Interacts with IREB2 only in iron-rich conditions. Associates with the TNF-R1 signaling complex (TNF-RSC) in a stimulation-dependent manner. Interacts with EYA1, TAB2, TAB3, MAP3K7 TRAF6 and RIPK1. Interacts with IRF3. Post-translationally, auto-ubiquitinated. Auto-ubiquitination leads to degradation by the proteasome. Phosphorylated. In vitro, phosphorylation inhibits auto-ubiquitination activity. As to expression, widely expressed.

It catalyses the reaction [E2 ubiquitin-conjugating enzyme]-S-ubiquitinyl-L-cysteine + [acceptor protein]-L-lysine = [E2 ubiquitin-conjugating enzyme]-L-cysteine + [acceptor protein]-N(6)-ubiquitinyl-L-lysine.. It functions in the pathway protein modification; protein ubiquitination. E3 ubiquitin-protein ligase, which accepts ubiquitin from specific E2 ubiquitin-conjugating enzymes, such as UBE2L3/UBCM4, and then transfers it to substrates. Functions as an E3 ligase for oxidized IREB2 and both heme and oxygen are necessary for IREB2 ubiquitination. Promotes ubiquitination of TAB2 and IRF3 and their degradation by the proteasome. Component of the LUBAC complex which conjugates linear ('Met-1'-linked) polyubiquitin chains to substrates and plays a key role in NF-kappa-B activation and regulation of inflammation. LUBAC conjugates linear polyubiquitin to IKBKG and RIPK1 and is involved in activation of the canonical NF-kappa-B and the JNK signaling pathways. Linear ubiquitination mediated by the LUBAC complex interferes with TNF-induced cell death and thereby prevents inflammation. LUBAC is recruited to the TNF-R1 signaling complex (TNF-RSC) following polyubiquitination of TNF-RSC components by BIRC2 and/or BIRC3 and to conjugate linear polyubiquitin to IKBKG and possibly other components contributing to the stability of the complex. The LUBAC complex is also involved in innate immunity by conjugating linear polyubiquitin chains at the surface of bacteria invading the cytosol to form the ubiquitin coat surrounding bacteria. LUBAC is not able to initiate formation of the bacterial ubiquitin coat, and can only promote formation of linear polyubiquitins on pre-existing ubiquitin. The bacterial ubiquitin coat acts as an 'eat-me' signal for xenophagy and promotes NF-kappa-B activation. Together with OTULIN, the LUBAC complex regulates the canonical Wnt signaling during angiogenesis. Binds polyubiquitin of different linkage types. This is RanBP-type and C3HC4-type zinc finger-containing protein 1 (Rbck1) from Rattus norvegicus (Rat).